An 81-amino-acid chain; its full sequence is Acyl carrier protein (81 aa).

A Carrier domain is found at 4–79 (AEIKDKVYDI…QAIDYIVNKK (76 aa)). The residue at position 39 (S39) is an O-(pantetheine 4'-phosphoryl)serine.

This sequence belongs to the acyl carrier protein (ACP) family. In terms of processing, 4'-phosphopantetheine is transferred from CoA to a specific serine of apo-ACP by AcpS. This modification is essential for activity because fatty acids are bound in thioester linkage to the sulfhydryl of the prosthetic group.

The protein resides in the cytoplasm. The protein operates within lipid metabolism; fatty acid biosynthesis. In terms of biological role, carrier of the growing fatty acid chain in fatty acid biosynthesis. In Chlorobaculum tepidum (strain ATCC 49652 / DSM 12025 / NBRC 103806 / TLS) (Chlorobium tepidum), this protein is Acyl carrier protein.